The sequence spans 476 residues: 3-isopropylmalate dehydratase large subunit (476 aa).

[4Fe-4S] cluster contacts are provided by C353, C413, and C416.

Belongs to the aconitase/IPM isomerase family. LeuC type 1 subfamily. In terms of assembly, heterodimer of LeuC and LeuD. [4Fe-4S] cluster is required as a cofactor.

The enzyme catalyses (2R,3S)-3-isopropylmalate = (2S)-2-isopropylmalate. It participates in amino-acid biosynthesis; L-leucine biosynthesis; L-leucine from 3-methyl-2-oxobutanoate: step 2/4. Functionally, catalyzes the isomerization between 2-isopropylmalate and 3-isopropylmalate, via the formation of 2-isopropylmaleate. The protein is 3-isopropylmalate dehydratase large subunit of Yersinia pseudotuberculosis serotype O:1b (strain IP 31758).